Reading from the N-terminus, the 129-residue chain is MYDNLKSLGITNPDDIDRYSLRQEANNDILKIYFRKDKGEFFAKSVKFKYPRQRKTIVADNSGQGYKEINEISPNLRYVIDELDKICQQEQVEVDLKRKILDDLRHLESVVSNKITEIEADLEKLTKNR.

Belongs to the UPF0325 family.

The chain is UPF0325 protein PC1_0937 from Pectobacterium carotovorum subsp. carotovorum (strain PC1).